We begin with the raw amino-acid sequence, 365 residues long: Heat-inducible transcription repressor HrcA (365 aa).

Belongs to the HrcA family.

Its function is as follows. Negative regulator of class I heat shock genes (grpE-dnaK-dnaJ and groELS operons). Prevents heat-shock induction of these operons. In Nodularia spumigena, this protein is Heat-inducible transcription repressor HrcA.